A 170-amino-acid polypeptide reads, in one-letter code: Odorant-binding protein 2a (170 aa).

Positions Met-1–Ala-15 are cleaved as a signal peptide. Cys-74 and Cys-166 are joined by a disulfide.

Belongs to the calycin superfamily. Lipocalin family. As to quaternary structure, monomer. As to expression, strongly expressed in the nasal structures, salivary and lachrymal glands, and lung. Expressed in the liver.

It localises to the secreted. In terms of biological role, binds and transports small hydrophobic volatile molecules with a higher affinity for aldehydes and large fatty acids, including undecanal, palmitic acid, efficient aldehydes, benzenic aldehydes, heterocyclic aldehydes and aliphatic acids. This is Odorant-binding protein 2a (OBP2A) from Homo sapiens (Human).